The chain runs to 320 residues: Aminoacyl tRNA synthase complex-interacting multifunctional protein 2 (320 aa).

Residues 31-51 (HSKTTSPATDAGHVQEPSEPS) are disordered. Ser36 carries the post-translational modification Phosphoserine. The interaction with PRKN stretch occupies residues 82-162 (TPDADLDVTN…HTHSSVKNVP (81 aa)). The tract at residues 162–225 (PENLLKCFGE…FLFSLFGQKH (64 aa)) is interaction with TP53. Residues 220 to 317 (LFGQKHNAVH…NLAPFSTALQ (98 aa)) form the GST C-terminal domain.

Part of the multisynthetase complex (MSC), a multisubunit complex that groups tRNA ligases for Arg (RARS1), Asp (DARS1), Gln (QARS1), Ile (IARS1), Leu (LARS1), Lys (KARS1), Met (MARS1) the bifunctional ligase for Glu and Pro (EPRS1) and the auxiliary subunits AIMP1/p43, AIMP2/p38 and EEF1E1/p18. Interacts (via N-terminus) with KARS1. Interacts with EPRS1. Forms a linear complex that contains MARS1, EEF1E1, EPRS1 and AIMP2 that is at the core of the multisubunit complex. Binds FUBP1 (via C-terminus). Interacts in both its unphosphorylated and phosphorylated forms with p53/TP53 (via N-terminus) in the nucleus following UV irradiation. Interacts (via N-terminus) with PRKN/parkin (via first RING-type domain). Interacts with TARS3. In terms of processing, phosphorylated on serine residues in response to UV irradiation. Post-translationally, ubiquitinated by PRKN, leading to its degradation by the proteasome.

Its subcellular location is the cytoplasm. The protein resides in the cytosol. It localises to the nucleus. Required for assembly and stability of the aminoacyl-tRNA synthase complex. Mediates ubiquitination and degradation of FUBP1, a transcriptional activator of MYC, leading to MYC down-regulation which is required for aveolar type II cell differentiation. Blocks MDM2-mediated ubiquitination and degradation of p53/TP53. Functions as a proapoptotic factor. The chain is Aminoacyl tRNA synthase complex-interacting multifunctional protein 2 (Aimp2) from Rattus norvegicus (Rat).